The sequence spans 294 residues: Ribosomal protein L11 methyltransferase (294 aa).

4 residues coordinate S-adenosyl-L-methionine: threonine 144, glycine 165, aspartate 187, and asparagine 229.

It belongs to the methyltransferase superfamily. PrmA family.

The protein localises to the cytoplasm. The catalysed reaction is L-lysyl-[protein] + 3 S-adenosyl-L-methionine = N(6),N(6),N(6)-trimethyl-L-lysyl-[protein] + 3 S-adenosyl-L-homocysteine + 3 H(+). Methylates ribosomal protein L11. The sequence is that of Ribosomal protein L11 methyltransferase from Pseudomonas paraeruginosa (strain DSM 24068 / PA7) (Pseudomonas aeruginosa (strain PA7)).